Here is a 145-residue protein sequence, read N- to C-terminus: Probable transport accessory protein MmpS2 (145 aa).

The helical transmembrane segment at 11-31 threads the bilayer; it reads MWLLLAIVVVAVVGGLGIYRL.

The protein belongs to the MmpS family.

It is found in the cell membrane. The chain is Probable transport accessory protein MmpS2 (mmpS2) from Mycobacterium bovis (strain ATCC BAA-935 / AF2122/97).